Here is a 275-residue protein sequence, read N- to C-terminus: Large ribosomal subunit protein uL2 (275 aa).

The interval 236-263 (EGRGKGQHPVTPWGMPTKGYKTRRGRRA) is disordered.

Belongs to the universal ribosomal protein uL2 family. In terms of assembly, part of the 50S ribosomal subunit. Forms a bridge to the 30S subunit in the 70S ribosome.

One of the primary rRNA binding proteins. Required for association of the 30S and 50S subunits to form the 70S ribosome, for tRNA binding and peptide bond formation. It has been suggested to have peptidyltransferase activity; this is somewhat controversial. Makes several contacts with the 16S rRNA in the 70S ribosome. The chain is Large ribosomal subunit protein uL2 from Pseudothermotoga lettingae (strain ATCC BAA-301 / DSM 14385 / NBRC 107922 / TMO) (Thermotoga lettingae).